Consider the following 147-residue polypeptide: MRHYEIVFMVHPDQSEQVAGMIERYTGSIKDSGGQIHRLEDWGRRQMAYPINKLHKAHYVLMNIEAEQSVVDELESTFRFNDAVIRNMIMRAKNAVTEPSPMMKAKEERFTKRDDREERSDRSEAPRAEAPAKAEAPAKAEDEAAAE.

The disordered stretch occupies residues 96–147 (VTEPSPMMKAKEERFTKRDDREERSDRSEAPRAEAPAKAEAPAKAEDEAAAE). Over residues 104–147 (KAKEERFTKRDDREERSDRSEAPRAEAPAKAEAPAKAEDEAAAE) the composition is skewed to basic and acidic residues.

Belongs to the bacterial ribosomal protein bS6 family.

Functionally, binds together with bS18 to 16S ribosomal RNA. The chain is Small ribosomal subunit protein bS6 from Photobacterium profundum (strain SS9).